Reading from the N-terminus, the 358-residue chain is MPLVSLSFASSSSKAMALCSICPRIPLRFRPKPISPFLSKPQICLAYRVYSSLQSTTPSTRDELGTVSIGFLGMGIMGSPMAQNLIKAGCDVTVWNRTKSKCDPLVGLGAKYKSSPEEVTATCDLTFAMLADPESAIDVACGKNGAIFGISSGKGYVDVSTVDVASSILISKQIKDTGALFLEAPVSGSKKPAEDGQLIFLTAGDKPLYEKAAPFLDIMGKSKFYLGEVGNGAAMKLVVNMIMGSMMASFAEGILLSQKVGLDPNVLVEVVSQGAINAPMYSLKGPSMIKSVYPTAFPLKHQQKDMRLALGLAESVSQSTPIAAAANELYKVAKSYGLSDEDFSAVIEALKAAKSREA.

A chloroplast-targeting transit peptide spans M1–C44. NADP(+)-binding positions include G70–N84 and T161. K236 is an active-site residue. K304 provides a ligand contact to NADP(+).

This sequence belongs to the HIBADH-related family. NP60 subfamily.

It is found in the plastid. Its subcellular location is the chloroplast stroma. It catalyses the reaction glycolate + NADP(+) = glyoxylate + NADPH + H(+). The catalysed reaction is 4-hydroxybutanoate + NADP(+) = succinate semialdehyde + NADPH + H(+). With respect to regulation, the ratio of NADPH/NADP(+) may regulate enzymatic activity. Its function is as follows. Catalyzes the NADPH-dependent reduction of glyoxylate to glycolate as well as succinic semialdehyde (SSA) to gamma-hydroxybutyrate in vitro. May function in redox homeostasis and play a role in oxidative stress tolerance by detoxifying glyoxylate and SSA generated in glycolate metabolism and GABA metabolism, respectively. This is Glyoxylate/succinic semialdehyde reductase 2, chloroplastic (GLYR2) from Arabidopsis thaliana (Mouse-ear cress).